The chain runs to 101 residues: UPF0213 protein VC_A0739 (101 aa).

The GIY-YIG domain maps to 9-85 (SPWFVYLVRC…KALSKSQKEA (77 aa)).

This sequence belongs to the UPF0213 family.

The chain is UPF0213 protein VC_A0739 from Vibrio cholerae serotype O1 (strain ATCC 39315 / El Tor Inaba N16961).